Reading from the N-terminus, the 352-residue chain is Photosystem II D2 protein (352 aa).

Residues 40-60 traverse the membrane as a helical segment; that stretch reads CAYLALGGWLTGTTFVTSWYT. Histidine 117 lines the chlorophyll a pocket. The chain crosses the membrane as a helical span at residues 124–140; it reads GFMLRQFEIAQSVRLRP. Pheophytin a is bound by residues glutamine 129 and asparagine 142. A helical transmembrane segment spans residues 152–165; it reads VFVSVFLIYPLGQS. Histidine 197 contacts chlorophyll a. The helical transmembrane segment at 207 to 227 threads the bilayer; it reads AALLCAIHGATVENTLFEDGD. A plastoquinone-binding residues include histidine 214 and phenylalanine 261. Histidine 214 contributes to the Fe cation binding site. Histidine 268 contacts Fe cation. Residues 278–294 traverse the membrane as a helical segment; it reads GLWMSALGVVGLALNLR.

This sequence belongs to the reaction center PufL/M/PsbA/D family. In terms of assembly, PSII is composed of 1 copy each of membrane proteins PsbA, PsbB, PsbC, PsbD, PsbE, PsbF, PsbH, PsbI, PsbJ, PsbK, PsbL, PsbM, PsbT, PsbY, PsbZ, Psb30/Ycf12, at least 3 peripheral proteins of the oxygen-evolving complex and a large number of cofactors. It forms dimeric complexes. Requires The D1/D2 heterodimer binds P680, chlorophylls that are the primary electron donor of PSII, and subsequent electron acceptors. It shares a non-heme iron and each subunit binds pheophytin, quinone, additional chlorophylls, carotenoids and lipids. There is also a Cl(-1) ion associated with D1 and D2, which is required for oxygen evolution. The PSII complex binds additional chlorophylls, carotenoids and specific lipids. as cofactor.

It is found in the plastid. Its subcellular location is the chloroplast thylakoid membrane. The enzyme catalyses 2 a plastoquinone + 4 hnu + 2 H2O = 2 a plastoquinol + O2. In terms of biological role, photosystem II (PSII) is a light-driven water:plastoquinone oxidoreductase that uses light energy to abstract electrons from H(2)O, generating O(2) and a proton gradient subsequently used for ATP formation. It consists of a core antenna complex that captures photons, and an electron transfer chain that converts photonic excitation into a charge separation. The D1/D2 (PsbA/PsbD) reaction center heterodimer binds P680, the primary electron donor of PSII as well as several subsequent electron acceptors. D2 is needed for assembly of a stable PSII complex. This is Photosystem II D2 protein from Bigelowiella natans (Pedinomonas minutissima).